A 143-amino-acid chain; its full sequence is Large ribosomal subunit protein uL11 (143 aa).

It belongs to the universal ribosomal protein uL11 family. In terms of assembly, part of the ribosomal stalk of the 50S ribosomal subunit. Interacts with L10 and the large rRNA to form the base of the stalk. L10 forms an elongated spine to which L12 dimers bind in a sequential fashion forming a multimeric L10(L12)X complex. Post-translationally, one or more lysine residues are methylated.

Forms part of the ribosomal stalk which helps the ribosome interact with GTP-bound translation factors. The protein is Large ribosomal subunit protein uL11 of Ralstonia pickettii (strain 12J).